A 131-amino-acid chain; its full sequence is Insertion element IS1 protein InsB (131 aa).

Belongs to the transposase 27 family.

Functionally, absolutely required for transposition of IS1. This Shigella flexneri protein is Insertion element IS1 protein InsB (insB1).